Consider the following 515-residue polypeptide: MSQRFAPGQAPVQSRYQPPPPAPGMRPYPPPGASFPPRGFPLHPNTTQPVPGTANVAGVPGVPGVPGVPGPSLLQRAAQQPGFQSSLRGTGAGGGGVGSGGGSKRSNESRSLGGGGSKSDFATAKKKKKLAEKILPQKVRDLVPESQAYMDLLTFERKLDATIMRKRLDIQEALKRPMKQKRKLRIFISNTFYPSKEPTNDGEEGAVASWELRVEGRLLEDGKGDPNTKIKRKFSSFFKSLVIELDKELYGPDNHLVEWHRTHTTQETDGFQVKRPGDRNVRCTILLLLDYQPLQFKLDPRLARLLGVHTQTRPVIISALWQYIKTHKLQDAHEREYINCDKYLEQIFSCQRMKFAEIPQRLNPLLHPPDPIVINHFIESGAENKQTACYDIDVEVDDTLKNQMNSFLMSTASQQEIQGLDTKIHETVDTINQMKTNREFFLSFAKDPQMFIHRWIISETRDLKLMTDVAGNPEEERRAEFYYQPWTHEAVSRYFFTKVNQKRAELEQALGIRNG.

The disordered stretch occupies residues 1-124; that stretch reads MSQRFAPGQA…GGSKSDFATA (124 aa). Over residues 17–34 the composition is skewed to pro residues; the sequence is QPPPPAPGMRPYPPPGAS. Residues 49 to 62 are compositionally biased toward low complexity; the sequence is PVPGTANVAGVPGV. Over residues 90-103 the composition is skewed to gly residues; sequence TGAGGGGVGSGGGS. Residues 116–204 are DNA-binding; it reads GSKSDFATAK…SKEPTNDGEE (89 aa). Positions 291 to 368 constitute an SWIB/MDM2 domain; sequence YQPLQFKLDP…PQRLNPLLHP (78 aa).

As to quaternary structure, there are 2 distinct Brahma complexes in the fruit fly, the Brahma-associated proteins (BAP) and Polybromo-containing BAP (PBAP) complexes, which are composed of common subunits Brm, Mor, Snr1/Bap45, Bap111/Dalo, Bap55, Bap60 and Act42A/Bap47, and additional signature subunits osa in the BAP complex and Polybromo and Bap170 in the PBAP complex. Interacts with sisA and sc. Interacts with mor. Interacts with p53. Interacts with erm (via N-terminal). Interacts with akirin; interaction is immune stimulation-dependent; activates selected Rel target gene promoters.

Its function is as follows. Involved in the recruitment and site-specific anchoring of the Brahma complex at specific promoter sites. The Brahma complex is a multiprotein complex which is the equivalent of the yeast SWI/SNF complex and acts by remodeling the chromatin by catalyzing an ATP-dependent alteration in the structure of nucleosomal DNA. This complex can both serve as a transcriptional coactivator or corepressor, depending on the context. Participates in X-chromosomal dosage compensation. Participates in neurogenesis. This chain is Brahma-associated protein of 60 kDa (Bap60), found in Drosophila melanogaster (Fruit fly).